Consider the following 156-residue polypeptide: Endogenous retrovirus group K member 6 Pro protein (156 aa).

Residues 21–96 (FEGLVDTGAD…IPLNLWGRDL (76 aa)) enclose the Peptidase A2 domain. Asp-26 is a catalytic residue. The G-patch domain maps to 111–156 (YSPTSQKIMTKMGYIPGKGLGKNEDGIKIPVEAKINQEREGIGNPC).

This sequence belongs to the peptidase A2 family. HERV class-II K(HML-2) subfamily. As to quaternary structure, active as a homodimer. Post-translationally, autoproteolytically processed at the N-terminus. Expected C-terminal autoprocessing not detected. The sequence shown is that of the processed Pro protein.

The catalysed reaction is Processing at the authentic HIV-1 PR recognition site and release of the mature p17 matrix and the p24 capsid protein, as a result of the cleavage of the -SQNY-|-PIVQ- cleavage site.. Retroviral proteases have roles in the processing of the primary translation products and the maturation of the viral particle. Endogenous Pro proteins may have kept, lost or modified their original function during evolution. In Homo sapiens (Human), this protein is Endogenous retrovirus group K member 6 Pro protein (ERVK-6).